A 274-amino-acid chain; its full sequence is Hydroxyacylglutathione hydrolase, cytoplasmic isozyme (274 aa).

6 residues coordinate Zn(2+): histidine 59, histidine 61, aspartate 63, histidine 64, histidine 121, and aspartate 144. Residues arginine 153 and 188–190 (HEY) each bind substrate. Histidine 188 lines the Zn(2+) pocket. Serine 257 carries the post-translational modification Phosphoserine. 268–271 (RAMK) contributes to the substrate binding site.

The protein belongs to the metallo-beta-lactamase superfamily. Glyoxalase II family. Zn(2+) serves as cofactor.

The protein localises to the cytoplasm. It catalyses the reaction an S-(2-hydroxyacyl)glutathione + H2O = a 2-hydroxy carboxylate + glutathione + H(+). The catalysed reaction is (R)-S-lactoylglutathione + H2O = (R)-lactate + glutathione + H(+). It functions in the pathway secondary metabolite metabolism; methylglyoxal degradation; (R)-lactate from methylglyoxal: step 2/2. With respect to regulation, inhibited by various thiol compounds such as glutathione and coenzyme A. Its function is as follows. Thiolesterase that catalyzes the hydrolysis of S-D-lactoylglutathione to form glutathione and D-lactic acid. Involved in the metabolism of methylglyoxal, a toxic compound for yeast proliferation, by converting methylglyoxal to lactate via S-D-lactoylglutathione by sequential enzyme reactions catalyzed by glyoxalase I and glyoxalase II. The chain is Hydroxyacylglutathione hydrolase, cytoplasmic isozyme from Saccharomyces cerevisiae (strain ATCC 204508 / S288c) (Baker's yeast).